We begin with the raw amino-acid sequence, 55 residues long: MAKPTTVKIRLVSTADTGFFYVTKKNPRNTTEKMTFRKYDPVVRKHVEFKEAKIK.

Belongs to the bacterial ribosomal protein bL33 family.

In Novosphingobium aromaticivorans (strain ATCC 700278 / DSM 12444 / CCUG 56034 / CIP 105152 / NBRC 16084 / F199), this protein is Large ribosomal subunit protein bL33.